A 600-amino-acid chain; its full sequence is Methionine--tRNA ligase (600 aa).

The short motif at 11–21 (PYANGPRHIGH) is the 'HIGH' region element. 4 residues coordinate Zn(2+): cysteine 143, cysteine 146, cysteine 156, and cysteine 159. Positions 351 to 355 (KFSSS) match the 'KMSKS' region motif. Serine 354 is a binding site for ATP.

It belongs to the class-I aminoacyl-tRNA synthetase family. MetG type 1 subfamily. In terms of assembly, monomer. The cofactor is Zn(2+).

The protein localises to the cytoplasm. The catalysed reaction is tRNA(Met) + L-methionine + ATP = L-methionyl-tRNA(Met) + AMP + diphosphate. Functionally, is required not only for elongation of protein synthesis but also for the initiation of all mRNA translation through initiator tRNA(fMet) aminoacylation. The sequence is that of Methionine--tRNA ligase from Salinispora arenicola (strain CNS-205).